Reading from the N-terminus, the 946-residue chain is DNA primase (946 aa).

A disordered region spans residues 596 to 626 (RDTEEDEDGKEDKNNVPGNGVFQKTTSSVDT). The segment covering 617-626 (FQKTTSSVDT) has biased composition (polar residues). A CHC2-type zinc finger spans residues 881–920 (CLNYTHRNPQETVQVFIDLRTEHSYALWASLWSRCFTKKC).

Belongs to the herpesviridae DNA primase family. Associates with the helicase and the primase-associated factor to form the helicase-primase factor.

It is found in the host nucleus. Functionally, essential component of the helicase/primase complex. Unwinds the DNA at the replication forks and generates single-stranded DNA for both leading and lagging strand synthesis. The primase initiates primer synthesis and thereby produces large amount of short RNA primers on the lagging strand that the polymerase elongates using dNTPs. The protein is DNA primase (UL70) of Human cytomegalovirus (strain Merlin) (HHV-5).